A 306-amino-acid chain; its full sequence is MTNEFLHFEKISRQTWQSLHRKTTPPLTEEELESIKSFNDQISLQDVTDIYLPLAHLIQIYKRTKEDLAFSKGIFLQRESKSQPFIIGVSGSVAVGKSTTSRLLQILLSRTFTDATVELVTTDGFLYPNQTLIEQGILNRKGFPESYDMEALLNFLDRIKNGQDVDIPVYSHEVYDIVPEEKQSVKAADFVIVEGINVFQNPQNDRLYITDFFDFSIYVDAGVDDIESWYLDRFLKMLSLAQNDPDSYYYRFTQMPIGEVEAFAHQVWISINLTNLQNYIEPTRNRAEVILHKSKNHEIDEIYLKK.

ATP is bound at residue 91–98; the sequence is GSVAVGKS.

It belongs to the prokaryotic pantothenate kinase family.

The protein localises to the cytoplasm. It carries out the reaction (R)-pantothenate + ATP = (R)-4'-phosphopantothenate + ADP + H(+). Its pathway is cofactor biosynthesis; coenzyme A biosynthesis; CoA from (R)-pantothenate: step 1/5. The protein is Pantothenate kinase of Streptococcus pneumoniae (strain Hungary19A-6).